A 172-amino-acid chain; its full sequence is UPF0398 protein gbs0290 (172 aa).

Belongs to the UPF0398 family.

This chain is UPF0398 protein gbs0290, found in Streptococcus agalactiae serotype III (strain NEM316).